The sequence spans 214 residues: Large ribosomal subunit protein uL3 (214 aa).

N5-methylglutamine is present on Gln-153.

Belongs to the universal ribosomal protein uL3 family. As to quaternary structure, part of the 50S ribosomal subunit. Forms a cluster with proteins L14 and L19. Post-translationally, methylated by PrmB.

In terms of biological role, one of the primary rRNA binding proteins, it binds directly near the 3'-end of the 23S rRNA, where it nucleates assembly of the 50S subunit. In Aromatoleum aromaticum (strain DSM 19018 / LMG 30748 / EbN1) (Azoarcus sp. (strain EbN1)), this protein is Large ribosomal subunit protein uL3.